Consider the following 360-residue polypeptide: Histidinol-phosphate aminotransferase (360 aa).

Position 218 is an N6-(pyridoxal phosphate)lysine (Lys218).

The protein belongs to the class-II pyridoxal-phosphate-dependent aminotransferase family. Histidinol-phosphate aminotransferase subfamily. Homodimer. Pyridoxal 5'-phosphate is required as a cofactor.

The catalysed reaction is L-histidinol phosphate + 2-oxoglutarate = 3-(imidazol-4-yl)-2-oxopropyl phosphate + L-glutamate. The protein operates within amino-acid biosynthesis; L-histidine biosynthesis; L-histidine from 5-phospho-alpha-D-ribose 1-diphosphate: step 7/9. The chain is Histidinol-phosphate aminotransferase from Chlorobium phaeovibrioides (strain DSM 265 / 1930) (Prosthecochloris vibrioformis (strain DSM 265)).